Reading from the N-terminus, the 289-residue chain is Methionyl-tRNA formyltransferase (289 aa).

106–109 (SLLP) lines the (6S)-5,6,7,8-tetrahydrofolate pocket.

The protein belongs to the Fmt family.

It carries out the reaction L-methionyl-tRNA(fMet) + (6R)-10-formyltetrahydrofolate = N-formyl-L-methionyl-tRNA(fMet) + (6S)-5,6,7,8-tetrahydrofolate + H(+). Attaches a formyl group to the free amino group of methionyl-tRNA(fMet). The formyl group appears to play a dual role in the initiator identity of N-formylmethionyl-tRNA by promoting its recognition by IF2 and preventing the misappropriation of this tRNA by the elongation apparatus. In Mycoplasmopsis pulmonis (strain UAB CTIP) (Mycoplasma pulmonis), this protein is Methionyl-tRNA formyltransferase.